An 842-amino-acid chain; its full sequence is Protein P (842 aa).

A terminal protein domain (TP) region spans residues 1 to 177 (MPLSYQHFRK…FCGSPYSWEQ (177 aa)). The spacer stretch occupies residues 178 to 346 (ELQHGRLVFQ…YCLTHIVNLL (169 aa)). The segment at 218–274 (LKQSRLGLQPQQGSLARGKSGRSGSIRARVPPTTRRSFGVEPSGSGHIDNRASSTSS) is disordered. The tract at residues 347 to 690 (EDWGPCTEHG…YLHLYPVARR (344 aa)) is polymerase/reverse transcriptase domain (RT). Residues 357–600 (EHNIRIPRTP…YSLNFMGYVI (244 aa)) form the Reverse transcriptase domain. Positions 429, 551, and 552 each coordinate Mg(2+).

It belongs to the hepadnaviridae P protein family.

It carries out the reaction DNA(n) + a 2'-deoxyribonucleoside 5'-triphosphate = DNA(n+1) + diphosphate. The enzyme catalyses Endonucleolytic cleavage to 5'-phosphomonoester.. Activated by host HSP70 and HSP40 in vitro to be able to bind the epsilon loop of the pgRNA. Because deletion of the RNase H region renders the protein partly chaperone-independent, the chaperones may be needed indirectly to relieve occlusion of the RNA-binding site by this domain. Inhibited by several reverse-transcriptase inhibitors: Lamivudine, Adefovir and Entecavir. In terms of biological role, multifunctional enzyme that converts the viral RNA genome into dsDNA in viral cytoplasmic capsids. This enzyme displays a DNA polymerase activity that can copy either DNA or RNA templates, and a ribonuclease H (RNase H) activity that cleaves the RNA strand of RNA-DNA heteroduplexes in a partially processive 3'- to 5'-endonucleasic mode. Neo-synthesized pregenomic RNA (pgRNA) are encapsidated together with the P protein, and reverse-transcribed inside the nucleocapsid. Initiation of reverse-transcription occurs first by binding the epsilon loop on the pgRNA genome, and is initiated by protein priming, thereby the 5'-end of (-)DNA is covalently linked to P protein. Partial (+)DNA is synthesized from the (-)DNA template and generates the relaxed circular DNA (RC-DNA) genome. After budding and infection, the RC-DNA migrates in the nucleus, and is converted into a plasmid-like covalently closed circular DNA (cccDNA). The activity of P protein does not seem to be necessary for cccDNA generation, and is presumably released from (+)DNA by host nuclear DNA repair machinery. The polypeptide is Protein P (Hepatitis B virus genotype C subtype adr (isolate Korea/Kim/1989) (HBV-C)).